A 317-amino-acid polypeptide reads, in one-letter code: Transaldolase (317 aa).

K131 acts as the Schiff-base intermediate with substrate in catalysis.

This sequence belongs to the transaldolase family. Type 1 subfamily. Homodimer.

It localises to the cytoplasm. The enzyme catalyses D-sedoheptulose 7-phosphate + D-glyceraldehyde 3-phosphate = D-erythrose 4-phosphate + beta-D-fructose 6-phosphate. The protein operates within carbohydrate degradation; pentose phosphate pathway; D-glyceraldehyde 3-phosphate and beta-D-fructose 6-phosphate from D-ribose 5-phosphate and D-xylulose 5-phosphate (non-oxidative stage): step 2/3. Functionally, transaldolase is important for the balance of metabolites in the pentose-phosphate pathway. The sequence is that of Transaldolase from Baumannia cicadellinicola subsp. Homalodisca coagulata.